The primary structure comprises 132 residues: Fatty acid-binding protein, intestinal (132 aa).

At A2 the chain carries N-acetylalanine. Residues W83 and R107 each contribute to the hexadecanoate site. Tetradecanoate-binding residues include W83 and R107.

This sequence belongs to the calycin superfamily. Fatty-acid binding protein (FABP) family. Expressed in the small intestine and at much lower levels in the large intestine. Highest expression levels in the jejunum.

Its subcellular location is the cytoplasm. In terms of biological role, FABPs are thought to play a role in the intracellular transport of long-chain fatty acids and their acyl-CoA esters. FABP2 is probably involved in triglyceride-rich lipoprotein synthesis. Binds saturated long-chain fatty acids with a high affinity, but binds with a lower affinity to unsaturated long-chain fatty acids. FABP2 may also help maintain energy homeostasis by functioning as a lipid sensor. This chain is Fatty acid-binding protein, intestinal (FABP2), found in Homo sapiens (Human).